We begin with the raw amino-acid sequence, 75 residues long: Mitotic-spindle organizing protein 1 (75 aa).

Belongs to the MOZART1 family. In terms of assembly, part of the gamma-tubulin complex.

It localises to the cytoplasm. The protein localises to the cytoskeleton. The protein resides in the microtubule organizing center. It is found in the centrosome. Its subcellular location is the spindle. Its function is as follows. Required for gamma-tubulin complex recruitment to the centrosome. This is Mitotic-spindle organizing protein 1 (mzt1) from Danio rerio (Zebrafish).